The sequence spans 180 residues: Putative phycocyanobilin lyase CpcS 2 (180 aa).

It belongs to the CpcS/CpeS biliprotein lyase family.

Covalently attaches a chromophore to Cys residue(s) of phycobiliproteins (Potential). In vitro does not act as a chromophore lyase for ApcA1, ApcA2, ApcB, ApcD, ApcF, CpcB or PecB, the lyase activity is therefore unsure. The sequence is that of Putative phycocyanobilin lyase CpcS 2 (cpeS2) from Nostoc sp. (strain PCC 7120 / SAG 25.82 / UTEX 2576).